The sequence spans 275 residues: Large ribosomal subunit protein uL2 (275 aa).

Positions 221–275 (VRGVAMNPVDHPMGGGEGKSSGGRHPCSPWGQQSKGVRTRNNKRTDQFIVKRRSK) are disordered.

This sequence belongs to the universal ribosomal protein uL2 family. Part of the 50S ribosomal subunit. Forms a bridge to the 30S subunit in the 70S ribosome.

Functionally, one of the primary rRNA binding proteins. Required for association of the 30S and 50S subunits to form the 70S ribosome, for tRNA binding and peptide bond formation. It has been suggested to have peptidyltransferase activity; this is somewhat controversial. Makes several contacts with the 16S rRNA in the 70S ribosome. The sequence is that of Large ribosomal subunit protein uL2 from Desulfosudis oleivorans (strain DSM 6200 / JCM 39069 / Hxd3) (Desulfococcus oleovorans).